A 691-amino-acid polypeptide reads, in one-letter code: Elongation factor G (691 aa).

One can recognise a tr-type G domain in the interval 8–283 (EDYRNFGIMA…AVVDYLPSPA (276 aa)). GTP contacts are provided by residues 17 to 24 (AHIDAGKT), 81 to 85 (DTPGH), and 135 to 138 (NKMD).

It belongs to the TRAFAC class translation factor GTPase superfamily. Classic translation factor GTPase family. EF-G/EF-2 subfamily.

It is found in the cytoplasm. Functionally, catalyzes the GTP-dependent ribosomal translocation step during translation elongation. During this step, the ribosome changes from the pre-translocational (PRE) to the post-translocational (POST) state as the newly formed A-site-bound peptidyl-tRNA and P-site-bound deacylated tRNA move to the P and E sites, respectively. Catalyzes the coordinated movement of the two tRNA molecules, the mRNA and conformational changes in the ribosome. This is Elongation factor G from Methylobacterium radiotolerans (strain ATCC 27329 / DSM 1819 / JCM 2831 / NBRC 15690 / NCIMB 10815 / 0-1).